A 319-amino-acid polypeptide reads, in one-letter code: tRNA N6-adenosine threonylcarbamoyltransferase (319 aa).

Fe cation is bound by residues His-110 and His-114. Residues 132–136 (VVSGG), Asp-165, Gly-178, Asp-182, and Asn-271 each bind substrate. A Fe cation-binding site is contributed by Asp-300.

Belongs to the KAE1 / TsaD family. The cofactor is Fe(2+).

It is found in the cytoplasm. It catalyses the reaction L-threonylcarbamoyladenylate + adenosine(37) in tRNA = N(6)-L-threonylcarbamoyladenosine(37) in tRNA + AMP + H(+). Required for the formation of a threonylcarbamoyl group on adenosine at position 37 (t(6)A37) in tRNAs that read codons beginning with adenine. Is involved in the transfer of the threonylcarbamoyl moiety of threonylcarbamoyl-AMP (TC-AMP) to the N6 group of A37, together with TsaE and TsaB. TsaD likely plays a direct catalytic role in this reaction. This chain is tRNA N6-adenosine threonylcarbamoyltransferase, found in Mycoplasma capricolum subsp. capricolum (strain California kid / ATCC 27343 / NCTC 10154).